Consider the following 201-residue polypeptide: Small ribosomal subunit protein uS4 (201 aa).

The disordered stretch occupies residues 28–47; sequence KKNYPPGQHGNSRKRKTSEY. An S4 RNA-binding domain is found at 92 to 155; that stretch reads GRLDNIVFRL…KSLEVIANSL (64 aa).

The protein belongs to the universal ribosomal protein uS4 family. As to quaternary structure, part of the 30S ribosomal subunit. Contacts protein S5. The interaction surface between S4 and S5 is involved in control of translational fidelity.

In terms of biological role, one of the primary rRNA binding proteins, it binds directly to 16S rRNA where it nucleates assembly of the body of the 30S subunit. Functionally, with S5 and S12 plays an important role in translational accuracy. The protein is Small ribosomal subunit protein uS4 of Bacteroides fragilis (strain YCH46).